The chain runs to 255 residues: uncharacterized protein (255 aa).

The J domain maps to 4-72; it reads DPYSVLGVEK…KRRKHYDKTG (69 aa). Basic residues-rich tracts occupy residues 167-178 and 243-255; these read FAPNEKKRKRRA and TKPK…RSKE. 2 disordered regions span residues 167 to 215 and 230 to 255; these read FAPN…EEAL and LISN…RSKE.

Belongs to the DnaJ family.

Its subcellular location is the nucleus. It is found in the nucleolus. This is an uncharacterized protein from Schizosaccharomyces pombe (strain 972 / ATCC 24843) (Fission yeast).